Consider the following 98-residue polypeptide: Integration host factor subunit beta (98 aa).

This sequence belongs to the bacterial histone-like protein family. Heterodimer of an alpha and a beta chain.

Its function is as follows. This protein is one of the two subunits of integration host factor, a specific DNA-binding protein that functions in genetic recombination as well as in transcriptional and translational control. The sequence is that of Integration host factor subunit beta from Pseudomonas entomophila (strain L48).